A 198-amino-acid polypeptide reads, in one-letter code: Na(+)-translocating NADH-quinone reductase subunit E (198 aa).

6 helical membrane passes run 11-31 (AVFI…FLAV), 35-55 (VTTA…SVPA), 77-97 (FLNF…LEMI), 109-129 (LGIF…VSFM), 140-160 (IVYG…LASI), and 176-196 (LGIT…FSGV).

It belongs to the NqrDE/RnfAE family. In terms of assembly, composed of six subunits; NqrA, NqrB, NqrC, NqrD, NqrE and NqrF.

It localises to the cell inner membrane. The enzyme catalyses a ubiquinone + n Na(+)(in) + NADH + H(+) = a ubiquinol + n Na(+)(out) + NAD(+). In terms of biological role, NQR complex catalyzes the reduction of ubiquinone-1 to ubiquinol by two successive reactions, coupled with the transport of Na(+) ions from the cytoplasm to the periplasm. NqrA to NqrE are probably involved in the second step, the conversion of ubisemiquinone to ubiquinol. This chain is Na(+)-translocating NADH-quinone reductase subunit E, found in Photorhabdus laumondii subsp. laumondii (strain DSM 15139 / CIP 105565 / TT01) (Photorhabdus luminescens subsp. laumondii).